We begin with the raw amino-acid sequence, 179 residues long: GTP-dependent dephospho-CoA kinase (179 aa).

Residues Asp55, Val57, Asp74, Lys76, and Glu128 each coordinate GTP.

This sequence belongs to the GTP-dependent DPCK family.

The catalysed reaction is 3'-dephospho-CoA + GTP = GDP + CoA + H(+). The protein operates within cofactor biosynthesis; coenzyme A biosynthesis. Its function is as follows. Catalyzes the GTP-dependent phosphorylation of the 3'-hydroxyl group of dephosphocoenzyme A to form coenzyme A (CoA). This chain is GTP-dependent dephospho-CoA kinase, found in Saccharolobus islandicus (strain M.16.4 / Kamchatka #3) (Sulfolobus islandicus).